The sequence spans 252 residues: Adaptation to cold protein B (252 aa).

As to quaternary structure, interacts with AtcC, but not with AtcA and AtcJ. Interacts with the RNA polymerase subunits RpoB and RpoC.

Its function is as follows. Involved in cold adaptation. Directly interacts with the RNA polymerase and decreases its activity. May direct the DnaK chaperone to the RNA polymerase to sustain life at low temperatures. Overproduction prevents bacterial growth due to RNA polymerase inhibition. This is Adaptation to cold protein B from Shewanella oneidensis (strain ATCC 700550 / JCM 31522 / CIP 106686 / LMG 19005 / NCIMB 14063 / MR-1).